The primary structure comprises 436 residues: UPF0597 protein YhaM (436 aa).

The protein belongs to the UPF0597 family.

This chain is UPF0597 protein YhaM, found in Shigella flexneri serotype 5b (strain 8401).